A 214-amino-acid polypeptide reads, in one-letter code: Large ribosomal subunit protein bL25 (214 aa).

The tract at residues 189-214 is disordered; it reads IHASRKAKADEDEAAEGEEGEEGAED. The segment covering 198-214 has biased composition (acidic residues); the sequence is DEDEAAEGEEGEEGAED.

It belongs to the bacterial ribosomal protein bL25 family. CTC subfamily. In terms of assembly, part of the 50S ribosomal subunit; part of the 5S rRNA/L5/L18/L25 subcomplex. Contacts the 5S rRNA. Binds to the 5S rRNA independently of L5 and L18.

Its function is as follows. This is one of the proteins that binds to the 5S RNA in the ribosome where it forms part of the central protuberance. This is Large ribosomal subunit protein bL25 from Alkalilimnicola ehrlichii (strain ATCC BAA-1101 / DSM 17681 / MLHE-1).